Consider the following 45-residue polypeptide: Large ribosomal subunit protein bL36 (45 aa).

It belongs to the bacterial ribosomal protein bL36 family.

The protein is Large ribosomal subunit protein bL36 of Aliivibrio salmonicida (strain LFI1238) (Vibrio salmonicida (strain LFI1238)).